A 307-amino-acid chain; its full sequence is 4-diphosphocytidyl-2-C-methyl-D-erythritol kinase (307 aa).

Lys-14 is a catalytic residue. 107–117 (PVAGGMAGGSA) is a binding site for ATP. Asp-149 is an active-site residue.

This sequence belongs to the GHMP kinase family. IspE subfamily.

The enzyme catalyses 4-CDP-2-C-methyl-D-erythritol + ATP = 4-CDP-2-C-methyl-D-erythritol 2-phosphate + ADP + H(+). It participates in isoprenoid biosynthesis; isopentenyl diphosphate biosynthesis via DXP pathway; isopentenyl diphosphate from 1-deoxy-D-xylulose 5-phosphate: step 3/6. Functionally, catalyzes the phosphorylation of the position 2 hydroxy group of 4-diphosphocytidyl-2C-methyl-D-erythritol. The chain is 4-diphosphocytidyl-2-C-methyl-D-erythritol kinase from Thermobifida fusca (strain YX).